The primary structure comprises 636 residues: Zinc finger protein 90 (636 aa).

The region spanning 14–85 is the KRAB domain; the sequence is VTFKDVAVNF…EKEIQRPFCP (72 aa). 7 consecutive C2H2-type zinc fingers follow at residues 208-230, 250-272, 278-300, 306-328, 334-356, 362-384, and 390-412; these read YKCD…EKIH, HECA…QRIH, FECN…ENAH, YQCS…QRIH, YRCN…EVTH, FQCK…ERTH, and FECS…MRIH. Positions 227-247 are disordered; that stretch reads EKIHKGDPYSNGTDQGAQSGR. Lys-444 is covalently cross-linked (Glycyl lysine isopeptide (Lys-Gly) (interchain with G-Cter in SUMO2)). 6 consecutive C2H2-type zinc fingers follow at residues 446 to 468, 494 to 516, 522 to 544, 550 to 572, 578 to 600, and 606 to 628; these read YHCN…QRLH, YQCN…HRIH, YECN…ERTH, YECI…ERTH, YECN…QRTH, and YACK…HRVH.

This sequence belongs to the krueppel C2H2-type zinc-finger protein family. Interacts (via N- and C-termini) with REST (via zinc-finger DNA-binding domain); the interaction inhibits REST repressor activity. Brain, spleen, thymus, and testis. Expressed in heart.

It is found in the nucleus. Its function is as follows. Inhibits the transcriptional repressor activity of REST by inhibiting its binding to DNA, thereby derepressing transcription of REST target genes. This chain is Zinc finger protein 90 (Zfp90), found in Mus musculus (Mouse).